A 387-amino-acid polypeptide reads, in one-letter code: Xylose isomerase (387 aa).

Active-site residues include histidine 53 and aspartate 56. Residues glutamate 180, glutamate 216, histidine 219, aspartate 244, aspartate 254, aspartate 256, and aspartate 286 each contribute to the Mg(2+) site.

This sequence belongs to the xylose isomerase family. In terms of assembly, homotetramer. Requires Mg(2+) as cofactor.

It localises to the cytoplasm. It carries out the reaction alpha-D-xylose = alpha-D-xylulofuranose. The protein is Xylose isomerase (xylA) of Thermus thermophilus (strain ATCC 27634 / DSM 579 / HB8).